The primary structure comprises 315 residues: Acetaldehyde dehydrogenase 2 (315 aa).

11–14 (SGNI) contacts NAD(+). Residue Cys-129 is the Acyl-thioester intermediate of the active site. Residues 160-168 (SAGPGTRSN) and Asn-290 contribute to the NAD(+) site.

It belongs to the acetaldehyde dehydrogenase family.

It catalyses the reaction acetaldehyde + NAD(+) + CoA = acetyl-CoA + NADH + H(+). This chain is Acetaldehyde dehydrogenase 2, found in Mycobacterium sp. (strain KMS).